Consider the following 62-residue polypeptide: Sauvatide (62 aa).

Positions 1–24 (MDILKKSLFLILFLGLVSISFCDG) are cleaved as a signal peptide. The propeptide occupies 25–46 (EKRQDDDEANESEEKKEIHEVE). Position 58 is a lysine amide (Lys58).

Expressed by the skin glands.

The protein resides in the secreted. Its function is as follows. Induces contraction of smooth muscle in isolated rat urinary bladder with an EC(50) value of 2.2nM. This Phyllomedusa sauvagei (Sauvage's leaf frog) protein is Sauvatide.